Reading from the N-terminus, the 602-residue chain is MDSPTLPHSISASSSTPFASAAVKPHRNKLLSRNGILIIIAASCILLLLISLLIYATVSKSSRNHHNPSHQTPTSDDHPPPETPPSPPPIAQIRLACNATRFPDHCVASLSKPGQVPPDPKPVQIIHSAISVSYENLKSGQSKIQSILDSSAGNRNRTNIATICLEILSYSQHRTESTDIAVTSGDIKDARAWMSAALAYQFDCWSGLKTVNDTKQVVDTITFFEGLVNLTGNALSMMLSFDSFGDDVVSWIRPATERDGFWEKAGPSLGSGTGTEASLGFPSGLTEDVTVCKNGGKDCKYKTVQEAVDSAPDTNRTVKFVIRIREGVYEETVRVPFEKKNVVFIGDGMGKTVITGSLNVGQPGMTTFESATVGVLGDGFMARDLTIENTAGADAHQAVAFRSDSDFSVLENCEFLGNQDTLYAHSLRQFYKQCRIQGNVDFIFGNSAAVFQDCDILIASKHSKLEQGGANNAITAHGRIDASQSTGFVFLNCSINGTEEYMKEFQANPEGHKNFLGRPWKEFSRTVFVNCNLESLISPDGWMPWNGDFALKTLYYGEYKNTGPGSVRSSRVPWSSEIPEKHVDVYSVANFIQADEWASTTA.

Residues 36–56 form a helical membrane-spanning segment; the sequence is ILIIIAASCILLLLISLLIYA. The disordered stretch occupies residues 62-91; it reads SRNHHNPSHQTPTSDDHPPPETPPSPPPIA. Positions 81 to 90 are enriched in pro residues; sequence PETPPSPPPI. The tract at residues 87 to 237 is pectinesterase inhibitor 64; sequence PPPIAQIRLA…VNLTGNALSM (151 aa). N-linked (GlcNAc...) asparagine glycosylation is found at N98, N156, N212, N229, and N315. Residues 288-595 are pectinesterase 64; sequence DVTVCKNGGK…YSVANFIQAD (308 aa). Residues T367 and Q397 each coordinate substrate. Catalysis depends on D420, which acts as the Proton donor; for pectinesterase activity. C434 and C454 form a disulfide bridge. D441 functions as the Nucleophile; for pectinesterase activity in the catalytic mechanism. 2 N-linked (GlcNAc...) asparagine glycosylation sites follow: N492 and N496. Substrate-binding residues include R518 and W520.

This sequence in the N-terminal section; belongs to the PMEI family. In the C-terminal section; belongs to the pectinesterase family. Expressed in siliques.

The protein localises to the membrane. It catalyses the reaction [(1-&gt;4)-alpha-D-galacturonosyl methyl ester](n) + n H2O = [(1-&gt;4)-alpha-D-galacturonosyl](n) + n methanol + n H(+). It functions in the pathway glycan metabolism; pectin degradation; 2-dehydro-3-deoxy-D-gluconate from pectin: step 1/5. Acts in the modification of cell walls via demethylesterification of cell wall pectin. In Arabidopsis thaliana (Mouse-ear cress), this protein is Probable pectinesterase/pectinesterase inhibitor 64 (PME64).